Here is a 244-residue protein sequence, read N- to C-terminus: Biosynthetic peptidoglycan transglycosylase (244 aa).

Residues 25 to 45 (LLLLLTAALLYQSWFLLHIVY) form a helical membrane-spanning segment.

Belongs to the glycosyltransferase 51 family.

The protein resides in the cell inner membrane. It catalyses the reaction [GlcNAc-(1-&gt;4)-Mur2Ac(oyl-L-Ala-gamma-D-Glu-L-Lys-D-Ala-D-Ala)](n)-di-trans,octa-cis-undecaprenyl diphosphate + beta-D-GlcNAc-(1-&gt;4)-Mur2Ac(oyl-L-Ala-gamma-D-Glu-L-Lys-D-Ala-D-Ala)-di-trans,octa-cis-undecaprenyl diphosphate = [GlcNAc-(1-&gt;4)-Mur2Ac(oyl-L-Ala-gamma-D-Glu-L-Lys-D-Ala-D-Ala)](n+1)-di-trans,octa-cis-undecaprenyl diphosphate + di-trans,octa-cis-undecaprenyl diphosphate + H(+). It functions in the pathway cell wall biogenesis; peptidoglycan biosynthesis. Functionally, peptidoglycan polymerase that catalyzes glycan chain elongation from lipid-linked precursors. This is Biosynthetic peptidoglycan transglycosylase from Nitrosomonas europaea (strain ATCC 19718 / CIP 103999 / KCTC 2705 / NBRC 14298).